Reading from the N-terminus, the 407-residue chain is MTETTPKTAPWTVQKRTAVLVLADGTVIEGKGLGATGAVEAEVVFNTALTGYEEILTDPSYAGQIVTFTFPHIGNVGANAEDIEDLTPANRHGAVGAIFKADITAPSNFRAAEDLDSWLKHRGIIALAGIDTRALTALIRERGAQNAVIAHDPNGNFDLDALKARAANWCGLENLDLAKDVTIGQSLVWKELPWTLQDGYGEQDAPQYHVVALDFGVKRNILRLLTGLGAKVTVLPATATAEDVLAHNPDGVFLSNGPGDPAATGEYAVPTIGKLVETGIPLFGICLGHQMLALALGGRTEKMHQGHHGANHPVKDYTTGKVEIVSMNHGFAVDSDSLPENVEETHVSLFDGTNCGLRVVGKPVFSVQHHPEASPGPQDSHYLFRRFINLIRERKGQAPLPEREQAA.

The tract at residues 1 to 205 is CPSase; sequence MTETTPKTAP…LQDGYGEQDA (205 aa). The L-glutamine site is built by serine 60, glycine 257, and glycine 259. The region spanning 209–397 is the Glutamine amidotransferase type-1 domain; sequence HVVALDFGVK…INLIRERKGQ (189 aa). The Nucleophile role is filled by cysteine 286. Leucine 287, glutamine 290, asparagine 328, glycine 330, and phenylalanine 331 together coordinate L-glutamine. Active-site residues include histidine 370 and glutamate 372.

This sequence belongs to the CarA family. As to quaternary structure, composed of two chains; the small (or glutamine) chain promotes the hydrolysis of glutamine to ammonia, which is used by the large (or ammonia) chain to synthesize carbamoyl phosphate. Tetramer of heterodimers (alpha,beta)4.

It carries out the reaction hydrogencarbonate + L-glutamine + 2 ATP + H2O = carbamoyl phosphate + L-glutamate + 2 ADP + phosphate + 2 H(+). It catalyses the reaction L-glutamine + H2O = L-glutamate + NH4(+). Its pathway is amino-acid biosynthesis; L-arginine biosynthesis; carbamoyl phosphate from bicarbonate: step 1/1. It participates in pyrimidine metabolism; UMP biosynthesis via de novo pathway; (S)-dihydroorotate from bicarbonate: step 1/3. Small subunit of the glutamine-dependent carbamoyl phosphate synthetase (CPSase). CPSase catalyzes the formation of carbamoyl phosphate from the ammonia moiety of glutamine, carbonate, and phosphate donated by ATP, constituting the first step of 2 biosynthetic pathways, one leading to arginine and/or urea and the other to pyrimidine nucleotides. The small subunit (glutamine amidotransferase) binds and cleaves glutamine to supply the large subunit with the substrate ammonia. In Brucella canis (strain ATCC 23365 / NCTC 10854 / RM-666), this protein is Carbamoyl phosphate synthase small chain.